We begin with the raw amino-acid sequence, 636 residues long: 1-deoxy-D-xylulose-5-phosphate synthase (636 aa).

Residues H74 and 115 to 117 (GHA) each bind thiamine diphosphate. Residue D146 participates in Mg(2+) binding. Thiamine diphosphate-binding positions include 147 to 148 (GA), N175, Y285, and E368. N175 contacts Mg(2+).

Belongs to the transketolase family. DXPS subfamily. Homodimer. The cofactor is Mg(2+). Requires thiamine diphosphate as cofactor.

The catalysed reaction is D-glyceraldehyde 3-phosphate + pyruvate + H(+) = 1-deoxy-D-xylulose 5-phosphate + CO2. The protein operates within metabolic intermediate biosynthesis; 1-deoxy-D-xylulose 5-phosphate biosynthesis; 1-deoxy-D-xylulose 5-phosphate from D-glyceraldehyde 3-phosphate and pyruvate: step 1/1. In terms of biological role, catalyzes the acyloin condensation reaction between C atoms 2 and 3 of pyruvate and glyceraldehyde 3-phosphate to yield 1-deoxy-D-xylulose-5-phosphate (DXP). In Anaeromyxobacter sp. (strain K), this protein is 1-deoxy-D-xylulose-5-phosphate synthase.